The primary structure comprises 962 residues: Protease 3 (962 aa).

The first 23 residues, Met1–Ala23, serve as a signal peptide directing secretion. His88 serves as a coordination point for Zn(2+). Catalysis depends on Glu91, which acts as the Proton acceptor. Zn(2+) contacts are provided by His92 and Glu169.

The protein belongs to the peptidase M16 family. Monomer. The cofactor is Zn(2+).

Its subcellular location is the periplasm. It carries out the reaction Preferential cleavage of 16-Tyr-|-Leu-17 and 25-Phe-|-Tyr-26 bonds of oxidized insulin B chain. Also acts on other substrates of Mw less than 7 kDa such as insulin and glucagon.. Functionally, endopeptidase that degrades small peptides of less than 7 kDa, such as glucagon and insulin. The sequence is that of Protease 3 (ptrA) from Escherichia coli (strain K12).